Consider the following 217-residue polypeptide: Meiotic expression up-regulated protein 29 (217 aa).

Positions 1-21 (MFVVKTAVLLFFALFIGNTYA) are cleaved as a signal peptide. The Extracellular segment spans residues 22-133 (YTYSLDRIQA…SGVLLHRPWK (112 aa)). N-linked (GlcNAc...) asparagine glycosylation occurs at asparagine 84. A helical transmembrane segment spans residues 134–154 (LFSLKPFTAAFVLLLAASYLA). Residues 155 to 217 (TACFRMLGYL…VPVPVLDESV (63 aa)) are Cytoplasmic-facing.

The protein localises to the membrane. The protein is Meiotic expression up-regulated protein 29 (meu29) of Schizosaccharomyces pombe (strain 972 / ATCC 24843) (Fission yeast).